The primary structure comprises 533 residues: Lymphocyte cytosolic protein 2 (533 aa).

The 67-residue stretch at 12–78 (VLAWNSDNLA…SQDINKNEER (67 aa)) folds into the SAM domain. Y23 carries the post-translational modification Phosphotyrosine. 2 disordered regions span residues 78–359 (RRSI…PLAH) and 374–419 (SASL…TPLD). Residues 94 to 144 (ETESHEEDDGGWSSFEDDYESPNDDDPDGEDDGDYESPNEEEQALVDDAAD) show a composition bias toward acidic residues. Residues 151–172 (NNEEALQSSILPPNSFHNTNSM) show a composition bias toward polar residues. Residues 186–201 (PPVPPLRPKPALPPLP) are compositionally biased toward pro residues. Phosphoserine is present on residues S207 and S210. The span at 340-354 (NTFPSRSVQPSSKNT) shows a compositional bias: polar residues. 2 positions are modified to phosphoserine: S376 and S410. Positions 400-411 (LPVPNRPQPPSP) are enriched in pro residues. Residues 422 to 530 (WYVSYITRPE…RYQCTLTHAA (109 aa)) form the SH2 domain.

In terms of assembly, interacts with SLA. Interacts with CBLB. Interacts with GRB2. Interacts with SHB. Interacts with PRAM1. Interacts (via SH2 domain) with CD6 (via tyrosine phosphorylated C-terminus). Interacts with FYB1 and the phosphorylated form of FYB2. Interacts with 14-3-3 adapter/YWHAZ; this phosphorylation leads to YWHAZ proteolytic degradation. Interacts with VAV1; this interaction plays a role in TCR-mediated cytokine production. Interacts with AGER; this interaction plays an important role in AGER-mediated pro-inflammatory responses and cytokine release. Post-translationally, phosphorylated after T-cell receptor activation by ZAP70, ITK and TXK, which leads to the up-regulation of Th1 preferred cytokine IL-2. SYK-dependent phosphorylation is required for recruitment of PI3K signaling components. Highly expressed in spleen, thymus, and peripheral blood leukocytes.

It localises to the cytoplasm. Functionally, adapter protein primarily involved in signaling pathways within T-cells, as well as other immune cells such as platelets, mast cells, and natural killer (NK) cells. Plays a crucial role for transducing signal from the T-cell receptor (TCR) after antigen recognition leading to T-cell activation. Mechanistically, once phosphorylated by the kinase ZAP70, mediates interactions with the guanine-nucleotide exchange factor VAV1, the adapter protein NCK and the kinase ITK. In turn, stimulates the activation of PKC-theta/PRKCQ and NF-kappa-B transcriptional activity in response to CD3 and CD28 costimulation. Also plays an essential role in AGER-induced signaling pathways including p38 MAPK and ERK1/2 activation leading to cytokine release and pro-inflammatory responses. This chain is Lymphocyte cytosolic protein 2 (Lcp2), found in Mus musculus (Mouse).